Here is a 144-residue protein sequence, read N- to C-terminus: Maximins 7/H13 (144 aa).

Residues 1-18 (MNFKYIVAVSFLIASAYA) form the signal peptide. A propeptide spanning residues 19 to 43 (RSEENDEQSLSQRDVLEEESLREIR) is cleaved from the precursor. The residue at position 70 (N70) is an Asparagine amide. Positions 74-123 (TAEDHEVMKRLEAVMRDLDSLDYPEEAAERETRGFNQEEIANLFTKKEKR) are excised as a propeptide. A Leucine amide modification is found at L143.

The protein belongs to the bombinin family. As to expression, expressed by the skin glands.

It localises to the secreted. Its function is as follows. Maximin-7 shows antimicrobial activity against bacteria and against the fungus C.albicans. It has little hemolytic activity. Maximin-H13 shows antimicrobial activity against bacteria and against the fungus C.albicans. Shows strong hemolytic activity. The protein is Maximins 7/H13 of Bombina maxima (Giant fire-bellied toad).